A 244-amino-acid chain; its full sequence is Uridylate kinase (244 aa).

15–18 (KLSG) provides a ligand contact to ATP. The tract at residues 23-28 (GSEGFG) is involved in allosteric activation by GTP. Gly-57 contributes to the UMP binding site. Residues Gly-58 and Arg-62 each coordinate ATP. Residues Asp-77 and 138–145 (TGNPFFTT) each bind UMP. Thr-165, Phe-171, and Asp-174 together coordinate ATP.

This sequence belongs to the UMP kinase family. Homohexamer.

It is found in the cytoplasm. The enzyme catalyses UMP + ATP = UDP + ADP. Its pathway is pyrimidine metabolism; CTP biosynthesis via de novo pathway; UDP from UMP (UMPK route): step 1/1. Its activity is regulated as follows. Allosterically activated by GTP. Inhibited by UTP. Its function is as follows. Catalyzes the reversible phosphorylation of UMP to UDP. This Aeromonas salmonicida (strain A449) protein is Uridylate kinase.